We begin with the raw amino-acid sequence, 198 residues long: Bcl-2-like protein 11 (198 aa).

The disordered stretch occupies residues 1-72 (MAKQPSDVSS…PLAPPASPGP (72 aa)). The residue at position 69 (Ser69) is a Phosphoserine; by MAPK. A phosphoserine mark is found at Ser77, Ser87, and Ser94. Positions 148–162 (IAQELRRIGDEFNAY) match the BH3 motif.

This sequence belongs to the Bcl-2 family. In terms of assembly, forms heterodimers with a number of antiapoptotic Bcl-2 proteins, including MCL1, BCL2, BCL2L1 isoform Bcl-X(L), BCL2A1/BFL-1, BHRF1, and BCL2L2/BCLW. Does not heterodimerize with proapoptotic proteins such as BAD, BOK or BAK. Identified in a complex containing BCL2L11, DYNLL1 and BCL2L1 isoform Bcl-X(L); BH3 integrity is required for BCL2L1-binding. Interacts with YWHAZ. When phosphorylated, interacts with TRIM2; this interaction is associated with ubiquitination and degradation. Interacts with MCL1; may sequester BCL2L11 to prevent its pro-apoptotic activity. Interacts with GIMAP5. Interacts with BCL2L10/BCL-B. As to quaternary structure, interacts (when phosphorylated) with USP27X; the interaction leads to BCL2L11 deubiquitination and stabilization. Interacts with humanin; the interaction prevents BIM-induced apoptosis. Does not interact with humanin. In terms of assembly, interacts with BAX; the interaction may lead to BAX activation through conformational change. Does not interact with humanin. As to quaternary structure, interacts with BAX; the interaction may lead to BAX activation through conformational change. In terms of processing, phosphorylation at Ser-69 by MAPK1/MAPK3 leads to interaction with TRIM2 and polyubiquitination, followed by proteasomal degradation. Deubiquitination catalyzed by USP27X stabilizes the protein. Post-translationally, ubiquitination by TRIM2 following phosphorylation by MAPK1/MAPK3 leads to proteasomal degradation. Conversely, deubiquitination catalyzed by USP27X stabilizes the protein. In terms of tissue distribution, isoform BimEL, isoform BimL and isoform BimS are the predominant isoforms and are widely expressed with tissue-specific variation. Isoform Bim-gamma is most abundantly expressed in small intestine and colon, and in lower levels in spleen, prostate, testis, heart, liver and kidney.

It is found in the endomembrane system. The protein resides in the mitochondrion. In terms of biological role, induces apoptosis and anoikis. Isoform BimL is more potent than isoform BimEL. Isoform Bim-alpha1, isoform Bim-alpha2 and isoform Bim-alpha3 induce apoptosis, although less potent than isoform BimEL, isoform BimL and isoform BimS. Isoform Bim-gamma induces apoptosis. Isoform Bim-alpha3 induces apoptosis possibly through a caspase-mediated pathway. Isoform BimAC and isoform BimABC lack the ability to induce apoptosis. The protein is Bcl-2-like protein 11 (BCL2L11) of Homo sapiens (Human).